The following is a 120-amino-acid chain: Large ribosomal subunit protein uL18 (120 aa).

The protein belongs to the universal ribosomal protein uL18 family. In terms of assembly, part of the 50S ribosomal subunit; part of the 5S rRNA/L5/L18/L25 subcomplex. Contacts the 5S and 23S rRNAs.

In terms of biological role, this is one of the proteins that bind and probably mediate the attachment of the 5S RNA into the large ribosomal subunit, where it forms part of the central protuberance. The chain is Large ribosomal subunit protein uL18 from Gluconacetobacter diazotrophicus (strain ATCC 49037 / DSM 5601 / CCUG 37298 / CIP 103539 / LMG 7603 / PAl5).